The following is a 95-amino-acid chain: Putative protein RDUR (95 aa).

Basic and acidic residues predominate over residues 1–12 (MNNSFNKEDRMS). Residues 1–20 (MNNSFNKEDRMSSDTMVGSC) form a disordered region.

In terms of biological role, could play a role in innate immunity against viruses. The polypeptide is Putative protein RDUR (Homo sapiens (Human)).